The following is a 548-amino-acid chain: 2-succinyl-5-enolpyruvyl-6-hydroxy-3-cyclohexene-1-carboxylate synthase (548 aa).

The protein belongs to the TPP enzyme family. MenD subfamily. In terms of assembly, homodimer. Mg(2+) serves as cofactor. Requires Mn(2+) as cofactor. Thiamine diphosphate is required as a cofactor.

It catalyses the reaction isochorismate + 2-oxoglutarate + H(+) = 5-enolpyruvoyl-6-hydroxy-2-succinyl-cyclohex-3-ene-1-carboxylate + CO2. It functions in the pathway quinol/quinone metabolism; 1,4-dihydroxy-2-naphthoate biosynthesis; 1,4-dihydroxy-2-naphthoate from chorismate: step 2/7. It participates in quinol/quinone metabolism; menaquinone biosynthesis. Functionally, catalyzes the thiamine diphosphate-dependent decarboxylation of 2-oxoglutarate and the subsequent addition of the resulting succinic semialdehyde-thiamine pyrophosphate anion to isochorismate to yield 2-succinyl-5-enolpyruvyl-6-hydroxy-3-cyclohexene-1-carboxylate (SEPHCHC). The chain is 2-succinyl-5-enolpyruvyl-6-hydroxy-3-cyclohexene-1-carboxylate synthase from Mycolicibacterium vanbaalenii (strain DSM 7251 / JCM 13017 / BCRC 16820 / KCTC 9966 / NRRL B-24157 / PYR-1) (Mycobacterium vanbaalenii).